The following is a 520-amino-acid chain: Keratin, type II cytoskeletal 72 (520 aa).

The tract at residues 1–133 is head; sequence MSRQLTLYPG…DPEIQKVRAQ (133 aa). A coil 1A region spans residues 134–169; that stretch reads EREQIKALNNKFASFIDKVRFLEQQNQVLETKWELL. An IF rod domain is found at 134-447; it reads EREQIKALNN…KLLESEESRM (314 aa). A linker 1 region spans residues 170–188; sequence QQLDQNNSRRSLEPVHESY. Residues 189-280 form a coil 1B region; it reads ISNLQKQLEI…VLFEGEIAQM (92 aa). A linker 12 region spans residues 281 to 304; that stretch reads QSHISDTSVILSMDNNRQLDLDSI. Residues 305 to 443 form a coil 2 region; sequence LAEVRAQYEE…ATYRKLLESE (139 aa). Residues 444–520 are tail; the sequence is ESRMAGEYPS…SSCVSKKASR (77 aa). The tract at residues 495-520 is disordered; that stretch reads GSCGSELKDPPAKTSASSCVSKKASR.

It belongs to the intermediate filament family. Heterotetramer of two type I and two type II keratins.

In terms of biological role, has a role in hair formation. Specific component of keratin intermediate filaments in the inner root sheath (IRS) of the hair follicle. This Rattus norvegicus (Rat) protein is Keratin, type II cytoskeletal 72 (Krt72).